We begin with the raw amino-acid sequence, 133 residues long: Ribosome-binding factor A (133 aa).

The protein belongs to the RbfA family. In terms of assembly, monomer. Binds 30S ribosomal subunits, but not 50S ribosomal subunits or 70S ribosomes.

It is found in the cytoplasm. Functionally, one of several proteins that assist in the late maturation steps of the functional core of the 30S ribosomal subunit. Associates with free 30S ribosomal subunits (but not with 30S subunits that are part of 70S ribosomes or polysomes). Required for efficient processing of 16S rRNA. May interact with the 5'-terminal helix region of 16S rRNA. The protein is Ribosome-binding factor A of Nostoc sp. (strain PCC 7120 / SAG 25.82 / UTEX 2576).